A 266-amino-acid chain; its full sequence is Undecaprenyl-diphosphatase (266 aa).

The next 8 membrane-spanning stretches (helical) occupy residues 1-21, 39-59, 87-107, 111-131, 144-164, 183-203, 218-238, and 246-266; these read MDTF…FLPI, QGLS…VMYF, WWII…KGFI, FRSI…LWWA, VGWK…IPGT, AAAR…AILV, ALGL…HYFL, and MTPF…FIFL.

It belongs to the UppP family.

The protein localises to the cell inner membrane. It carries out the reaction di-trans,octa-cis-undecaprenyl diphosphate + H2O = di-trans,octa-cis-undecaprenyl phosphate + phosphate + H(+). Catalyzes the dephosphorylation of undecaprenyl diphosphate (UPP). Confers resistance to bacitracin. This Shewanella halifaxensis (strain HAW-EB4) protein is Undecaprenyl-diphosphatase.